Here is a 234-residue protein sequence, read N- to C-terminus: Adenosine 5'-phosphosulfate reductase (234 aa).

Residues Cys-120, Cys-121, Cys-203, and Cys-206 each contribute to the [4Fe-4S] cluster site. Catalysis depends on Cys-229, which acts as the Nucleophile; cysteine thiosulfonate intermediate.

This sequence belongs to the PAPS reductase family. CysH subfamily. Requires [4Fe-4S] cluster as cofactor.

Its subcellular location is the cytoplasm. It carries out the reaction [thioredoxin]-disulfide + sulfite + AMP + 2 H(+) = adenosine 5'-phosphosulfate + [thioredoxin]-dithiol. It participates in sulfur metabolism; hydrogen sulfide biosynthesis; sulfite from sulfate. Functionally, catalyzes the formation of sulfite from adenosine 5'-phosphosulfate (APS) using thioredoxin as an electron donor. The chain is Adenosine 5'-phosphosulfate reductase from Bacillus thuringiensis subsp. konkukian (strain 97-27).